We begin with the raw amino-acid sequence, 460 residues long: MCKIYLMAKSFLKDVLLGFSSLCDRTAAPLRLLLAVSGGADSMAMLSAFLELKSDINAEIFVLTVNHNIRPEKETLGDAQFVLDFCNDKCPCILAEIPKNTVFDEAKNRKTGIEDAARFLRYNEFEKAADSLNADYILTAHNKNDNYETVLMRLFQGSEPEALMGISPRRGRFIRPMLNISRSEIEEYLKEKNIPWREDATNLEASYLRNKVRHNLLPVLSICFDGWQSGLDKSLAKIKAQNDFVIASYKTKKEEWVLDKKEDCCRCKFLFFLSLDEALKLKFLQEGLILLKGKRRIPYSVFDDLMKLSDTKKIIFSGGFCIKKEGDEVLLFKAVTEEKTSEVFYSIWIDKPCSFDTPAGNFKALENDDGFFIVHESDKTCGIGPFKPPFCVRSRLFGDEIETSSGSKKSVKKIINEWNIDYENRNILPIIEEGGVVKGIYGAVFGKKNWYVVGDLGVKR.

37-42 (SGGADS) serves as a coordination point for ATP.

This sequence belongs to the tRNA(Ile)-lysidine synthase family.

It localises to the cytoplasm. It carries out the reaction cytidine(34) in tRNA(Ile2) + L-lysine + ATP = lysidine(34) in tRNA(Ile2) + AMP + diphosphate + H(+). In terms of biological role, ligates lysine onto the cytidine present at position 34 of the AUA codon-specific tRNA(Ile) that contains the anticodon CAU, in an ATP-dependent manner. Cytidine is converted to lysidine, thus changing the amino acid specificity of the tRNA from methionine to isoleucine. The polypeptide is tRNA(Ile)-lysidine synthase (Treponema denticola (strain ATCC 35405 / DSM 14222 / CIP 103919 / JCM 8153 / KCTC 15104)).